Here is a 356-residue protein sequence, read N- to C-terminus: Cyclin-D1-binding protein 1 (356 aa).

Ala2 bears the N-acetylalanine mark. Interaction with TCF3 regions lie at residues 2 to 181 and 147 to 356; these read ASST…VDFV and ISCN…AAEL. The segment at 2-187 is interaction with RPLP0; that stretch reads ASSTAAVPFL…VDFVKDAHEE (186 aa). Residues 2–205 are required for interaction with CCND1; that stretch reads ASSTAAVPFL…DPYSGLLNDS (204 aa). A disordered region spans residues 198 to 224; it reads YSGLLNDSEDNSDSHSDEDGVLGLPSN. The interaction with RPLP0 stretch occupies residues 236–356; the sequence is LIIPCLALVR…KALTQRAAEL (121 aa).

The protein belongs to the CCNDBP1 family. As to quaternary structure, interacts with CCND1 and GRAP2. May also interact with COPS5, RPLP0, SIRT6, SYF2 and TCF3. Phosphorylated. Expressed at high levels in brain, intestine, muscle and ovary and at lower levels in heart, kidney, liver, lung, spleen and testis.

It localises to the cytoplasm. The protein localises to the nucleus. In terms of biological role, may negatively regulate cell cycle progression. May act at least in part via inhibition of the cyclin-D1/CDK4 complex, thereby preventing phosphorylation of RB1 and blocking E2F-dependent transcription. May be required for hepatocyte proliferation. The chain is Cyclin-D1-binding protein 1 (Ccndbp1) from Mus musculus (Mouse).